We begin with the raw amino-acid sequence, 432 residues long: Asparagine--tRNA ligase (432 aa).

It belongs to the class-II aminoacyl-tRNA synthetase family. In terms of assembly, homodimer.

Its subcellular location is the cytoplasm. The catalysed reaction is tRNA(Asn) + L-asparagine + ATP = L-asparaginyl-tRNA(Asn) + AMP + diphosphate + H(+). The protein is Asparagine--tRNA ligase of Limosilactobacillus reuteri (strain DSM 20016) (Lactobacillus reuteri).